A 442-amino-acid chain; its full sequence is Septin-8 (442 aa).

Residues 1-16 are compositionally biased toward basic and acidic residues; the sequence is MAATDLERISNAEPEP. The interval 1-21 is disordered; the sequence is MAATDLERISNAEPEPRSLSL. Position 2 is an N-acetylalanine (Ala2). Residue Ser10 is modified to Phosphoserine. The region spanning 41–307 is the Septin-type G domain; it reads QGFSFNILCV…ELYRRCKLEE (267 aa). The tract at residues 51-58 is G1 motif; the sequence is GETGIGKS. GTP-binding positions include 51 to 58, Gly106, 187 to 195, Gly241, and Arg256; these read GETGIGKS and KADTISKSE. The tract at residues 103–106 is G3 motif; that stretch reads DAVG. The segment at 186–189 is G4 motif; sequence AKAD. Residues 322-407 are a coiled coil; sequence LQETYEAKRK…FNCRKAAMEA (86 aa). The span at 411-420 shows a compositional bias: polar residues; sequence QALHATSQQP. The segment at 411 to 442 is disordered; the sequence is QALHATSQQPLRKDKDKKKVGGWSSIYSVTIP.

It belongs to the TRAFAC class TrmE-Era-EngA-EngB-Septin-like GTPase superfamily. Septin GTPase family. As to quaternary structure, septins polymerize into heterooligomeric protein complexes that form filaments, and can associate with cellular membranes, actin filaments and microtubules. GTPase activity is required for filament formation. Interacts with SEPTIN7. Interacts with CDK14, SEPTIN4 and SEPTIN5. Interacts with VAMP2; the interaction inhibits interaction of VAMP2 with SYP. Interacts with STX1A. Expressed in cerebrum, hippocampus and cerebellum (at protein level). Expressed in heart (at protein level).

It localises to the cytoplasm. It is found in the cytoskeleton. The protein localises to the synapse. The protein resides in the cell projection. Its subcellular location is the axon. It localises to the cytoplasmic vesicle. It is found in the secretory vesicle. The protein localises to the synaptic vesicle membrane. The protein resides in the presynapse. Functionally, filament-forming cytoskeletal GTPase. May play a role in platelet secretion. Seems to participate in the process of SNARE complex formation in synaptic vesicles. In Rattus norvegicus (Rat), this protein is Septin-8.